A 257-amino-acid chain; its full sequence is 24 kDa outer membrane protein (257 aa).

Residues 1 to 21 form the signal peptide; that stretch reads MKNKSKLLACCLMALPISSFS.

This sequence belongs to the MipA/OmpV family.

The protein localises to the cell outer membrane. This chain is 24 kDa outer membrane protein, found in Pasteurella multocida (strain Pm70).